We begin with the raw amino-acid sequence, 311 residues long: Aspartate carbamoyltransferase catalytic subunit (311 aa).

2 residues coordinate carbamoyl phosphate: Arg57 and Thr58. An L-aspartate-binding site is contributed by Lys86. 3 residues coordinate carbamoyl phosphate: Arg107, His135, and Gln138. L-aspartate-binding residues include Arg168 and Arg230. Residues Leu269 and Pro270 each coordinate carbamoyl phosphate.

This sequence belongs to the aspartate/ornithine carbamoyltransferase superfamily. ATCase family. As to quaternary structure, heterooligomer of catalytic and regulatory chains.

It carries out the reaction carbamoyl phosphate + L-aspartate = N-carbamoyl-L-aspartate + phosphate + H(+). It functions in the pathway pyrimidine metabolism; UMP biosynthesis via de novo pathway; (S)-dihydroorotate from bicarbonate: step 2/3. Functionally, catalyzes the condensation of carbamoyl phosphate and aspartate to form carbamoyl aspartate and inorganic phosphate, the committed step in the de novo pyrimidine nucleotide biosynthesis pathway. The polypeptide is Aspartate carbamoyltransferase catalytic subunit (Staphylothermus marinus (strain ATCC 43588 / DSM 3639 / JCM 9404 / F1)).